The chain runs to 405 residues: 4-hydroxy-3-methylbut-2-enyl diphosphate reductase (405 aa).

C66 contributes to the [4Fe-4S] cluster binding site. H96 provides a ligand contact to (2E)-4-hydroxy-3-methylbut-2-enyl diphosphate. H96 serves as a coordination point for dimethylallyl diphosphate. H96 contacts isopentenyl diphosphate. Residue C158 coordinates [4Fe-4S] cluster. H186 is a (2E)-4-hydroxy-3-methylbut-2-enyl diphosphate binding site. H186 serves as a coordination point for dimethylallyl diphosphate. H186 is an isopentenyl diphosphate binding site. E188 (proton donor) is an active-site residue. T251 contributes to the (2E)-4-hydroxy-3-methylbut-2-enyl diphosphate binding site. A [4Fe-4S] cluster-binding site is contributed by C289. The (2E)-4-hydroxy-3-methylbut-2-enyl diphosphate site is built by S318, S319, N320, and S380. 4 residues coordinate dimethylallyl diphosphate: S318, S319, N320, and S380. Residues S318, S319, N320, and S380 each coordinate isopentenyl diphosphate.

The protein belongs to the IspH family. It depends on [4Fe-4S] cluster as a cofactor.

The enzyme catalyses isopentenyl diphosphate + 2 oxidized [2Fe-2S]-[ferredoxin] + H2O = (2E)-4-hydroxy-3-methylbut-2-enyl diphosphate + 2 reduced [2Fe-2S]-[ferredoxin] + 2 H(+). It catalyses the reaction dimethylallyl diphosphate + 2 oxidized [2Fe-2S]-[ferredoxin] + H2O = (2E)-4-hydroxy-3-methylbut-2-enyl diphosphate + 2 reduced [2Fe-2S]-[ferredoxin] + 2 H(+). Its pathway is isoprenoid biosynthesis; dimethylallyl diphosphate biosynthesis; dimethylallyl diphosphate from (2E)-4-hydroxy-3-methylbutenyl diphosphate: step 1/1. It participates in isoprenoid biosynthesis; isopentenyl diphosphate biosynthesis via DXP pathway; isopentenyl diphosphate from 1-deoxy-D-xylulose 5-phosphate: step 6/6. Its function is as follows. Catalyzes the conversion of 1-hydroxy-2-methyl-2-(E)-butenyl 4-diphosphate (HMBPP) into a mixture of isopentenyl diphosphate (IPP) and dimethylallyl diphosphate (DMAPP). Acts in the terminal step of the DOXP/MEP pathway for isoprenoid precursor biosynthesis. The sequence is that of 4-hydroxy-3-methylbut-2-enyl diphosphate reductase from Cyanothece sp. (strain PCC 7425 / ATCC 29141).